We begin with the raw amino-acid sequence, 327 residues long: Sideroflexin-2 (327 aa).

A run of 5 helical transmembrane segments spans residues 99-119 (GMLI…VVLW), 143-163 (VTQL…AAIG), 175-195 (LFQR…NIPL), 228-248 (EVVV…PLIM), and 267-287 (FQTL…CALF).

This sequence belongs to the sideroflexin family.

It is found in the mitochondrion membrane. It carries out the reaction L-serine(in) = L-serine(out). Functionally, mitochondrial amino-acid transporter that mediates transport of serine into mitochondria. The polypeptide is Sideroflexin-2 (Drosophila melanogaster (Fruit fly)).